The chain runs to 167 residues: RNA pyrophosphohydrolase (167 aa).

A Nudix hydrolase domain is found at 8-158 (PYRTCVGMML…KRPVYERVVK (151 aa)). The short motif at 47 to 68 (GGVDPGEDTWEAAKRELYEETN) is the Nudix box element.

Belongs to the Nudix hydrolase family. RppH subfamily. The cofactor is a divalent metal cation.

Its function is as follows. Accelerates the degradation of transcripts by removing pyrophosphate from the 5'-end of triphosphorylated RNA, leading to a more labile monophosphorylated state that can stimulate subsequent ribonuclease cleavage. This Rhodopseudomonas palustris (strain HaA2) protein is RNA pyrophosphohydrolase.